We begin with the raw amino-acid sequence, 89 residues long: Small ribosomal subunit protein uS15 (89 aa).

Belongs to the universal ribosomal protein uS15 family. Part of the 30S ribosomal subunit. Forms a bridge to the 50S subunit in the 70S ribosome, contacting the 23S rRNA.

In terms of biological role, one of the primary rRNA binding proteins, it binds directly to 16S rRNA where it helps nucleate assembly of the platform of the 30S subunit by binding and bridging several RNA helices of the 16S rRNA. Forms an intersubunit bridge (bridge B4) with the 23S rRNA of the 50S subunit in the ribosome. In Streptococcus uberis (strain ATCC BAA-854 / 0140J), this protein is Small ribosomal subunit protein uS15.